Consider the following 98-residue polypeptide: Protein S100-A11 (98 aa).

T5 is subject to Phosphothreonine. EF-hand domains follow at residues 12 to 47 and 50 to 85; these read LIAV…AFTK and KDPG…LAIA. The residue at position 22 (K22) is an N6-acetyllysine. Ca(2+) contacts are provided by S26, H28, E33, D63, N65, D67, Q69, and E74.

The protein belongs to the S-100 family. Homodimer; disulfide-linked. Post-translationally, phosphorylation at Thr-5 significantly suppresses homodimerization and promotes association with NCL/nucleolin which induces nuclear translocation.

The protein localises to the cytoplasm. It localises to the nucleus. In terms of biological role, facilitates the differentiation and the cornification of keratinocytes. The sequence is that of Protein S100-A11 (S100a11) from Rattus norvegicus (Rat).